The chain runs to 638 residues: CTTNBP2 N-terminal-like protein (638 aa).

Residues 87-284 (MKQCKNMQER…KDLEAAQQHR (198 aa)) are a coiled coil. Disordered stretches follow at residues 280-303 (AQQH…TATE), 360-430 (RELT…PCSS), 463-490 (RHKF…LSPT), and 514-621 (NQGP…CSPS). Ser285 bears the Phosphoserine mark. Residues 360–371 (RELTSDSSTENQ) are compositionally biased toward polar residues. Composition is skewed to low complexity over residues 401–430 (TMPS…PCSS) and 467–477 (QSQADQDQQAS). 7 positions are modified to phosphoserine: Ser481, Ser488, Ser522, Ser526, Ser559, Ser562, and Ser567. Polar residues predominate over residues 514 to 528 (NQGPIKPVSPNSSPF). Thr569 and Thr589 each carry phosphothreonine. The segment covering 589-620 (TPSQSATTPVTKTHSQASSLAATEDLASSCSP) has biased composition (polar residues). Residue Ser591 is modified to Phosphoserine.

In terms of assembly, interacts with CTTN/cortactin; this interaction may redistribute CTTN to stress fibers. May form homomers. Associates with the core of STRIPAK complexes composed of PP2A catalytic and scaffolding subunits, the striatins (PP2A regulatory subunits), the striatin-associated proteins MOB4, STRIP1 and STRIP2, PDCD10 and members of the STE20 kinases, such as STK24 and STK26. Predominantly expressed in skin, also detectable in spleen and lung (at protein level). Very low levels, if any, in brain (at protein level).

The protein localises to the cell projection. Its subcellular location is the lamellipodium. It is found in the cytoplasm. It localises to the cytoskeleton. The protein resides in the stress fiber. Its function is as follows. Regulates lamellipodial actin dynamics in a CTTN-dependent manner. Associates with core striatin-interacting phosphatase and kinase (STRIPAK) complex to form CTTNBP2NL-STRIPAK complexes. STRIPAK complexes have critical roles in protein (de)phosphorylation and are regulators of multiple signaling pathways including Hippo, MAPK, nuclear receptor and cytoskeleton remodeling. Different types of STRIPAK complexes are involved in a variety of biological processes such as cell growth, differentiation, apoptosis, metabolism and immune regulation. This Mus musculus (Mouse) protein is CTTNBP2 N-terminal-like protein (Cttnbp2nl).